The primary structure comprises 132 residues: UPF0299 membrane protein YohJ (132 aa).

4 consecutive transmembrane segments (helical) span residues 5 to 25, 26 to 46, 63 to 83, and 93 to 113; these read LNIIWQYLRAFVLIYACLYAG, IFIASLLPVTIPGSIIGMLIL, GCYVLIRYMALLFVPIGVGVM, and FGPVVVSCAVSTLVVFLVVSW.

It belongs to the UPF0299 family.

Its subcellular location is the cell inner membrane. The protein is UPF0299 membrane protein YohJ of Shigella flexneri serotype 5b (strain 8401).